A 503-amino-acid polypeptide reads, in one-letter code: AMP phosphorylase (503 aa).

Residues Gly168, 194-199 (SRAITS), and Thr203 each bind AMP. Asp256 (proton donor) is an active-site residue. 2 residues coordinate AMP: Ser264 and Lys288.

The protein belongs to the thymidine/pyrimidine-nucleoside phosphorylase family. Type 2 subfamily.

It catalyses the reaction AMP + phosphate = alpha-D-ribose 1,5-bisphosphate + adenine. The enzyme catalyses CMP + phosphate = cytosine + alpha-D-ribose 1,5-bisphosphate. The catalysed reaction is UMP + phosphate = alpha-D-ribose 1,5-bisphosphate + uracil. In terms of biological role, catalyzes the conversion of AMP and phosphate to adenine and ribose 1,5-bisphosphate (R15P). Exhibits phosphorylase activity toward CMP and UMP in addition to AMP. Functions in an archaeal AMP degradation pathway, together with R15P isomerase and RubisCO. The protein is AMP phosphorylase of Pyrococcus horikoshii (strain ATCC 700860 / DSM 12428 / JCM 9974 / NBRC 100139 / OT-3).